A 465-amino-acid chain; its full sequence is Cysteine--tRNA ligase (465 aa).

Zn(2+) is bound at residue cysteine 30. The 'HIGH' region motif lies at 32 to 42 (ITVYDYCHIGH). Cysteine 214, histidine 239, and glutamate 243 together coordinate Zn(2+). Residues 271 to 275 (KMSKS) carry the 'KMSKS' region motif. Residue lysine 274 coordinates ATP.

This sequence belongs to the class-I aminoacyl-tRNA synthetase family. In terms of assembly, monomer. It depends on Zn(2+) as a cofactor.

Its subcellular location is the cytoplasm. It carries out the reaction tRNA(Cys) + L-cysteine + ATP = L-cysteinyl-tRNA(Cys) + AMP + diphosphate. The protein is Cysteine--tRNA ligase of Burkholderia thailandensis (strain ATCC 700388 / DSM 13276 / CCUG 48851 / CIP 106301 / E264).